Here is an 80-residue protein sequence, read N- to C-terminus: Probable antimicrobial peptide clone Con10 (80 aa).

Positions 1–24 (MQYKTKTFLVIFLAYLVVTNEAEA) are cleaved as a signal peptide. A propeptide spanning residues 56-80 (EIEDFFDPYQRELDLELERLLSQLQ) is cleaved from the precursor.

The protein belongs to the non-disulfide-bridged peptide (NDBP) superfamily. Medium-length antimicrobial peptide (group 3) family. In terms of tissue distribution, expressed by the venom gland.

Its subcellular location is the secreted. The protein localises to the target cell membrane. Its function is as follows. Antimicrobial peptide. Has antifungal activity against all strains tested (MIC=12.5-200 uM). May act by disrupting the integrity of the bacterial cell membrane. The polypeptide is Probable antimicrobial peptide clone Con10 (Opisthacanthus cayaporum (South American scorpion)).